Reading from the N-terminus, the 273-residue chain is NAD-dependent protein deacetylase 2 (273 aa).

The region spanning 1-273 (MSNAPLANQS…RCEAALAFLL (273 aa)) is the Deacetylase sirtuin-type domain. NAD(+)-binding positions include 26–46 (GAGCSTNSGIPDYRDSHGNWK) and 104–107 (QNVD). Residue His122 is the Proton acceptor of the active site. Residues Cys130, Cys133, Cys181, and Cys184 each contribute to the Zn(2+) site. NAD(+)-binding positions include 221–223 (GSS), 247–249 (NLG), and Cys265.

Belongs to the sirtuin family. Class II subfamily. The cofactor is Zn(2+).

It is found in the cytoplasm. The catalysed reaction is N(6)-acetyl-L-lysyl-[protein] + NAD(+) + H2O = 2''-O-acetyl-ADP-D-ribose + nicotinamide + L-lysyl-[protein]. Functionally, NAD-dependent protein deacetylase which modulates the activities of several enzymes which are inactive in their acetylated form. The polypeptide is NAD-dependent protein deacetylase 2 (Bradyrhizobium diazoefficiens (strain JCM 10833 / BCRC 13528 / IAM 13628 / NBRC 14792 / USDA 110)).